The primary structure comprises 118 residues: Putative pterin-4-alpha-carbinolamine dehydratase (118 aa).

Belongs to the pterin-4-alpha-carbinolamine dehydratase family.

It carries out the reaction (4aS,6R)-4a-hydroxy-L-erythro-5,6,7,8-tetrahydrobiopterin = (6R)-L-erythro-6,7-dihydrobiopterin + H2O. This chain is Putative pterin-4-alpha-carbinolamine dehydratase, found in Pseudomonas paraeruginosa (strain DSM 24068 / PA7) (Pseudomonas aeruginosa (strain PA7)).